The chain runs to 446 residues: Enolase (446 aa).

A Mg(2+)-binding site is contributed by Ser42. A Phosphoserine modification is found at Ser42. A Pentapeptide insert motif is present at residues 104 to 108 (EWGWS). Position 133 is an N6-acetyllysine (Lys133). A Glycyl lysine isopeptide (Lys-Gly) (interchain with G-Cter in ubiquitin) cross-link involves residue Lys138. At Tyr139 the chain carries Phosphotyrosine. Substrate-binding residues include His166 and Glu175. Catalysis depends on Glu218, which acts as the Proton donor. Residue Asp253 coordinates Mg(2+). Residues 277-282 (DKSLVK) carry the DKSLVK motif motif. The Mg(2+) site is built by Glu304 and Asp331. Substrate contacts are provided by Glu304 and Asp331. At Thr339 the chain carries Phosphothreonine. The active-site Proton acceptor is the Lys356. Lys375 carries the post-translational modification N6-acetyllysine. Residues 383–386 (SHRS) and Lys407 each bind substrate.

Belongs to the enolase family. Homodimer. Forms a complex at least composed of DegP, ENO and HSP70. Interacts with G-actin. Interacts (via the DKSLVK motif) with mammalian host PLG/plasminogen (present in the mosquito blood meal); the interaction occurs at the ookinete cell surface and is required for ookinete invasion of the mosquito midgut. Interacts with A.gambiae EBP; depending on the Plasmodium species, the interaction is either involved in ookinete invasion of the mosquito midgut (P.berghei) or is dispensable (P.falciparum). Mg(2+) is required as a cofactor.

The protein localises to the cytoplasm. It is found in the nucleus. Its subcellular location is the cytoskeleton. It localises to the cell surface. The protein resides in the cell membrane. The protein localises to the vacuole. It carries out the reaction (2R)-2-phosphoglycerate = phosphoenolpyruvate + H2O. Its pathway is carbohydrate degradation; glycolysis; pyruvate from D-glyceraldehyde 3-phosphate: step 4/5. Glycolytic enzyme that catalyzes the conversion of 2-phosphoglycerate to phosphoenolpyruvate. In addition to glycolysis, involved in various processes such as parasite development and invasion. Plays an essential role during ookinete invasion of the mosquito vector midgut by mediating the interaction of the ookinete with the midgut epithelium and, further, by binding to mammalian host plasminogen in the blood meal, whose conversion to active plasmin promotes the invasion process. In Plasmodium falciparum, this protein is Enolase.